The following is a 655-amino-acid chain: WD repeat-containing protein 70 (655 aa).

Disordered stretches follow at residues Met-1–Thr-24 and Phe-43–Arg-170. Over residues Gln-45–Glu-78 the composition is skewed to basic and acidic residues. Residues Arg-99–Ser-112 show a composition bias toward low complexity. A compositionally biased stretch (acidic residues) spans Glu-148 to Asp-165. WD repeat units follow at residues His-181 to Lys-220, Cys-228 to Lys-269, Gly-282 to Ser-322, Gly-331 to Phe-370, Ala-377 to Phe-416, Pro-422 to Glu-467, and Ile-470 to Ala-509. Lys-297 participates in a covalent cross-link: Glycyl lysine isopeptide (Lys-Gly) (interchain with G-Cter in SUMO2). Residue Lys-453 is modified to N6-acetyllysine. Positions Arg-541 to Glu-566 are enriched in basic and acidic residues. Residues Arg-541 to Gly-582 are disordered. Positions Pro-572–Gly-582 are enriched in gly residues. Phosphothreonine is present on Thr-580. Residues Lys-591 and Lys-597 each participate in a glycyl lysine isopeptide (Lys-Gly) (interchain with G-Cter in SUMO2) cross-link. 2 positions are modified to phosphoserine: Ser-622 and Ser-639. The disordered stretch occupies residues Thr-632–Ile-655. The span at Lys-645–Ile-655 shows a compositional bias: basic and acidic residues.

It belongs to the WD repeat GAD-1 family.

This Rattus norvegicus (Rat) protein is WD repeat-containing protein 70 (Wdr70).